Reading from the N-terminus, the 264-residue chain is Thymidylate synthase (264 aa).

Arginine 21 is a binding site for dUMP. Histidine 51 serves as a coordination point for (6R)-5,10-methylene-5,6,7,8-tetrahydrofolate. Position 126–127 (126–127) interacts with dUMP; sequence RR. The active-site Nucleophile is cysteine 146. DUMP is bound by residues 166–169, asparagine 177, and 207–209; these read RSGD and HLY. Aspartate 169 contributes to the (6R)-5,10-methylene-5,6,7,8-tetrahydrofolate binding site. (6R)-5,10-methylene-5,6,7,8-tetrahydrofolate is bound at residue alanine 263.

The protein belongs to the thymidylate synthase family. Bacterial-type ThyA subfamily. Homodimer.

Its subcellular location is the cytoplasm. The catalysed reaction is dUMP + (6R)-5,10-methylene-5,6,7,8-tetrahydrofolate = 7,8-dihydrofolate + dTMP. The protein operates within pyrimidine metabolism; dTTP biosynthesis. Functionally, catalyzes the reductive methylation of 2'-deoxyuridine-5'-monophosphate (dUMP) to 2'-deoxythymidine-5'-monophosphate (dTMP) while utilizing 5,10-methylenetetrahydrofolate (mTHF) as the methyl donor and reductant in the reaction, yielding dihydrofolate (DHF) as a by-product. This enzymatic reaction provides an intracellular de novo source of dTMP, an essential precursor for DNA biosynthesis. The sequence is that of Thymidylate synthase from Xanthomonas campestris pv. campestris (strain 8004).